The chain runs to 890 residues: tRNase Z TRZ3, mitochondrial (890 aa).

The transit peptide at 1 to 44 directs the protein to the mitochondrion; the sequence is MINSMPYLHKNLRLLRLLSSKSSPFPLSLRPFSPRSFSLSTLFS. The segment at 46–67 is disordered; it reads SSSSSSMENNEATNGSKSSSNS.

Belongs to the RNase Z family. Homodimer. Zn(2+) is required as a cofactor. Requires Ca(2+) as cofactor. Mn(2+) serves as cofactor. The cofactor is Mg(2+).

The protein localises to the mitochondrion. The protein resides in the nucleus. It carries out the reaction Endonucleolytic cleavage of RNA, removing extra 3' nucleotides from tRNA precursor, generating 3' termini of tRNAs. A 3'-hydroxy group is left at the tRNA terminus and a 5'-phosphoryl group is left at the trailer molecule.. Functionally, zinc phosphodiesterase, which displays tRNA 3'-processing endonuclease activity. Involved in tRNA maturation, by removing a 3'-trailer from precursor tRNA. Can process the mitochondrial tRNA-like structures (t-elements). Involved in the processing of small nucleolar RNAs (snoRNAs). This Arabidopsis thaliana (Mouse-ear cress) protein is tRNase Z TRZ3, mitochondrial.